The following is a 471-amino-acid chain: Putative multidrug resistance protein MdtD (471 aa).

Topologically, residues 1 to 11 (MTDLPDSTRWQ) are periplasmic. A helical transmembrane segment spans residues 12–32 (LWIVAFGFFMQSLDTTIVNTA). The Cytoplasmic segment spans residues 33–48 (LPSMAQSLGESPLHMH). Residues 49-69 (MVIVSYVLTVAVMLPASGWLA) traverse the membrane as a helical segment. The Periplasmic segment spans residues 70-76 (DKVGVRN). Residues 77–97 (IFFTAIVLFTLGSLFCALSGT) traverse the membrane as a helical segment. The Cytoplasmic portion of the chain corresponds to 98–101 (LNEL). Residues 102-124 (LLARALQGVGGAMMVPVGRLTVM) form a helical membrane-spanning segment. The Periplasmic segment spans residues 125–137 (KIVPREQYMAAMT). Residues 138 to 158 (FVTLPGQVGPLLGPALGGLLV) form a helical membrane-spanning segment. The Cytoplasmic portion of the chain corresponds to 159-164 (EYASWH). The helical transmembrane segment at 165 to 185 (WIFLINIPVGIIGAIATLMLM) threads the bilayer. Over 186–196 (PNYTMQTRRFD) the chain is Periplasmic. A helical membrane pass occupies residues 197–217 (LSGFLLLAVGMAVLTLALDGS). Residues 218–224 (KGTGFSP) are Cytoplasmic-facing. A helical membrane pass occupies residues 225 to 245 (LAIAGLVAVGVVALVLYLLHA). Topologically, residues 246 to 262 (QNNNRALFSLKLFRTRN) are periplasmic. Residues 263-283 (FSLGLAGSFAGRIGSGMLPFM) form a helical membrane-spanning segment. Residues 284–285 (TP) are Cytoplasmic-facing. The helical transmembrane segment at 286–306 (VFLQIGLGFSPFHAGLMMIPM) threads the bilayer. Residues 307–341 (VLGSMGMKRIVVQVVNRFGYRRVLVATTLGLSLVT) lie on the Periplasmic side of the membrane. The helical transmembrane segment at 342–362 (LLFMTTALLGWYYVLPFVLFL) threads the bilayer. Over 363-395 (QGMVNSTRFSSMNTLTLKDLPDNLASSGNSLLS) the chain is Cytoplasmic. A helical membrane pass occupies residues 396 to 416 (MIMQLSMSIGVTIAGLLLGLF). At 417–430 (GSQHVSVDSGTTQT) the chain is on the periplasmic side. Residues 431 to 451 (VFMYTWLSMAFIIALPAFVFA) form a helical membrane-spanning segment. Topologically, residues 452-471 (RVPSDTHQNVAISRRKRSAQ) are cytoplasmic.

This sequence belongs to the major facilitator superfamily. TCR/Tet family.

It localises to the cell inner membrane. In Escherichia coli O1:K1 / APEC, this protein is Putative multidrug resistance protein MdtD.